The sequence spans 248 residues: Ethylene-responsive transcription factor ERF026 (248 aa).

Positions 89–145 (VYRGIRCRSGKWVSEIREPKKTTRVWLGTYPTPEMAAAAYDVAALALKGGDTLLNFP) form a DNA-binding region, AP2/ERF. The disordered stretch occupies residues 225–248 (PPWMGSPPSDDSPENSDGESLWSY).

This sequence belongs to the AP2/ERF transcription factor family. ERF subfamily.

It is found in the nucleus. Its function is as follows. Probably acts as a transcriptional activator. Binds to the GCC-box pathogenesis-related promoter element. May be involved in the regulation of gene expression by stress factors and by components of stress signal transduction pathways. The protein is Ethylene-responsive transcription factor ERF026 (ERF026) of Arabidopsis thaliana (Mouse-ear cress).